The following is a 187-amino-acid chain: Large ribosomal subunit protein uL24c (187 aa).

Residues 1–41 (MAALQSSFAGLSTSFFGQRFSPPLSLPPLVKSTEGPCLIQA) constitute a chloroplast transit peptide.

The protein belongs to the universal ribosomal protein uL24 family. Part of the 50S ribosomal subunit.

It localises to the plastid. The protein resides in the chloroplast. In terms of biological role, one of two assembly initiator proteins, it binds directly to the 5'-end of the 23S rRNA, where it nucleates assembly of the 50S subunit. The polypeptide is Large ribosomal subunit protein uL24c (RPL24) (Nicotiana tabacum (Common tobacco)).